The sequence spans 209 residues: Histidine biosynthesis bifunctional protein HisIE (209 aa).

A phosphoribosyl-AMP cyclohydrolase region spans residues 1-116 (MKQADELRFN…EEQAADRFGI (116 aa)). Residues 117–209 (MNELERVIAE…LKKRHSEIEE (93 aa)) form a phosphoribosyl-ATP pyrophosphohydrolase region.

The protein in the N-terminal section; belongs to the PRA-CH family. This sequence in the C-terminal section; belongs to the PRA-PH family.

The protein resides in the cytoplasm. It catalyses the reaction 1-(5-phospho-beta-D-ribosyl)-ATP + H2O = 1-(5-phospho-beta-D-ribosyl)-5'-AMP + diphosphate + H(+). It carries out the reaction 1-(5-phospho-beta-D-ribosyl)-5'-AMP + H2O = 1-(5-phospho-beta-D-ribosyl)-5-[(5-phospho-beta-D-ribosylamino)methylideneamino]imidazole-4-carboxamide. It participates in amino-acid biosynthesis; L-histidine biosynthesis; L-histidine from 5-phospho-alpha-D-ribose 1-diphosphate: step 2/9. Its pathway is amino-acid biosynthesis; L-histidine biosynthesis; L-histidine from 5-phospho-alpha-D-ribose 1-diphosphate: step 3/9. In Bacillus subtilis (strain 168), this protein is Histidine biosynthesis bifunctional protein HisIE (hisI).